Here is a 388-residue protein sequence, read N- to C-terminus: Chalcone synthase (388 aa).

Residue Cys-164 is part of the active site.

This sequence belongs to the thiolase-like superfamily. Chalcone/stilbene synthases family.

The enzyme catalyses (E)-4-coumaroyl-CoA + 3 malonyl-CoA + 3 H(+) = 2',4,4',6'-tetrahydroxychalcone + 3 CO2 + 4 CoA. Its pathway is secondary metabolite biosynthesis; flavonoid biosynthesis. The primary product of this enzyme is 4,2',4',6'-tetrahydroxychalcone (also termed naringenin-chalcone or chalcone) which can under specific conditions spontaneously isomerize into naringenin. The chain is Chalcone synthase (CHS) from Vigna unguiculata (Cowpea).